A 105-amino-acid chain; its full sequence is Protein METHYLENE BLUE SENSITIVITY 1 (105 aa).

The disordered stretch occupies residues 26 to 46 (RGGGKAGIADRTGKEKGGHAK). Residues 36-46 (RTGKEKGGHAK) show a composition bias toward basic and acidic residues.

As to expression, mainly expressed in the epidermis.

The protein localises to the nucleus. Its subcellular location is the cytoplasm. It is found in the stress granule. In terms of biological role, required for acclimation to reactive oxygen species (ROS) responses downstream of beta-cyclocitral (beta-cc) or mediated by dihydroactinidiolide, including singlet oxygen 1O(2) detoxification reactions, especially upon light-mediated photooxidative stress, and leading to programmed cell death. Prevents leaf senescence. Involved in cold acclimation. The sequence is that of Protein METHYLENE BLUE SENSITIVITY 1 from Arabidopsis thaliana (Mouse-ear cress).